A 195-amino-acid chain; its full sequence is Imidazoleglycerol-phosphate dehydratase (195 aa).

The protein belongs to the imidazoleglycerol-phosphate dehydratase family.

The protein resides in the cytoplasm. The enzyme catalyses D-erythro-1-(imidazol-4-yl)glycerol 3-phosphate = 3-(imidazol-4-yl)-2-oxopropyl phosphate + H2O. It participates in amino-acid biosynthesis; L-histidine biosynthesis; L-histidine from 5-phospho-alpha-D-ribose 1-diphosphate: step 6/9. This is Imidazoleglycerol-phosphate dehydratase from Sphingopyxis alaskensis (strain DSM 13593 / LMG 18877 / RB2256) (Sphingomonas alaskensis).